A 550-amino-acid chain; its full sequence is Coiled-coil domain-containing protein 60 (550 aa).

The interval 1–21 is disordered; that stretch reads MTKVPATKKLQSSPNSGAVRP. The stretch at 71 to 98 forms a coiled coil; that stretch reads AILREETAKKKKQQQLQKLKEEERNKFQ. Disordered regions lie at residues 219 to 293 and 336 to 367; these read KFKI…EPLY and AYKE…KKSK. Low complexity predominate over residues 235-256; it reads RGSTLSLSRASGGSSPQSSMIS. Polar residues predominate over residues 336 to 345; the sequence is AYKEMQTTLK.

In Homo sapiens (Human), this protein is Coiled-coil domain-containing protein 60 (CCDC60).